A 199-amino-acid polypeptide reads, in one-letter code: Probable chemoreceptor glutamine deamidase CheD (199 aa).

The protein belongs to the CheD family.

The catalysed reaction is L-glutaminyl-[protein] + H2O = L-glutamyl-[protein] + NH4(+). In terms of biological role, probably deamidates glutamine residues to glutamate on methyl-accepting chemotaxis receptors (MCPs), playing an important role in chemotaxis. In Cereibacter sphaeroides (Rhodobacter sphaeroides), this protein is Probable chemoreceptor glutamine deamidase CheD.